A 347-amino-acid polypeptide reads, in one-letter code: D-alanine--D-alanine ligase (347 aa).

The ATP-grasp domain maps to 131–333 (KRVLESAGIA…YPELIERLVD (203 aa)). 161–216 (EEKLAYPVFTKPSNMGSSVGISKSENQEELRQALELAFRYDSRVLVEQGVNAREIE) contributes to the ATP binding site. D287, E300, and N302 together coordinate Mg(2+).

It belongs to the D-alanine--D-alanine ligase family. Mg(2+) is required as a cofactor. Mn(2+) serves as cofactor.

The protein localises to the cytoplasm. The catalysed reaction is 2 D-alanine + ATP = D-alanyl-D-alanine + ADP + phosphate + H(+). It functions in the pathway cell wall biogenesis; peptidoglycan biosynthesis. In terms of biological role, cell wall formation. The protein is D-alanine--D-alanine ligase of Streptococcus pneumoniae (strain CGSP14).